Consider the following 59-residue polypeptide: MRKWVRQAQVDAGARPGTTTEESAEIKRLRRDNAELRRANAILKTASAFFAAELDRPAR.

Residues 1–26 (MRKWVRQAQVDAGARPGTTTEESAEI) are disordered.

The protein belongs to the transposase 8 family.

The sequence is that of Insertion element IS986 uncharacterized 6.6 kDa protein from Mycobacterium tuberculosis.